We begin with the raw amino-acid sequence, 267 residues long: Translation initiation factor 2 subunit alpha (267 aa).

The S1 motif domain occupies 17-88; it reads GEIVIGTVKR…KRGHIDLSIK (72 aa).

The protein belongs to the eIF-2-alpha family. As to quaternary structure, heterotrimer composed of an alpha, a beta and a gamma chain.

EIF-2 functions in the early steps of protein synthesis by forming a ternary complex with GTP and initiator tRNA. The polypeptide is Translation initiation factor 2 subunit alpha (eif2a) (Archaeoglobus fulgidus (strain ATCC 49558 / DSM 4304 / JCM 9628 / NBRC 100126 / VC-16)).